The following is an 806-amino-acid chain: ATP-dependent RNA helicase DBP7 (806 aa).

Residues K24–P135 form a disordered region. The span at P46–T56 shows a compositional bias: polar residues. The span at P69–R78 shows a compositional bias: basic and acidic residues. Polar residues predominate over residues G100–A113. A Q motif motif is present at residues E141–K170. The Helicase ATP-binding domain occupies P174–I380. A187 to T194 is a binding site for ATP. Residues D309 to D312 carry the DEAD box motif. One can recognise a Helicase C-terminal domain in the interval R413–S611. Disordered regions lie at residues P642–K677 and T741–D784. The span at S755 to R768 shows a compositional bias: gly residues.

The protein belongs to the DEAD box helicase family. DDX31/DBP7 subfamily.

The protein localises to the nucleus. It localises to the nucleolus. The enzyme catalyses ATP + H2O = ADP + phosphate + H(+). Functionally, ATP-binding RNA helicase involved in the biogenesis of 60S ribosomal subunits and is required for the normal formation of 25S and 5.8S rRNAs. In Chaetomium globosum (strain ATCC 6205 / CBS 148.51 / DSM 1962 / NBRC 6347 / NRRL 1970) (Soil fungus), this protein is ATP-dependent RNA helicase DBP7 (DBP7).